The chain runs to 277 residues: S-formylglutathione hydrolase FrmB (277 aa).

Residues Ser-145, Asp-221, and His-254 each act as charge relay system in the active site.

Belongs to the esterase D family.

It catalyses the reaction S-formylglutathione + H2O = formate + glutathione + H(+). In terms of biological role, serine hydrolase involved in the detoxification of formaldehyde. Hydrolyzes S-formylglutathione to glutathione and formate. This Escherichia coli (strain ATCC 8739 / DSM 1576 / NBRC 3972 / NCIMB 8545 / WDCM 00012 / Crooks) protein is S-formylglutathione hydrolase FrmB (frmB).